Here is a 416-residue protein sequence, read N- to C-terminus: GTPase Obg (416 aa).

The 157-residue stretch at 1–157 (MFQDVLVITV…RRLRLELMLI (157 aa)) folds into the Obg domain. 2 disordered regions span residues 25–44 (EKFV…GGSV) and 62–82 (TYKA…RGGE). Residues 32 to 42 (GPDGGDGGRGG) show a composition bias toward gly residues. A compositionally biased stretch (basic and acidic residues) spans 63–72 (YKAEDGEHGR). Residues 158–324 (ADVGLVGYPN…LKEALHALVR (167 aa)) enclose the OBG-type G domain. GTP-binding positions include 164-171 (GYPNAGKS), 189-193 (FTTLS), 211-214 (DIPG), 277-280 (NKVD), and 305-307 (SAL). The Mg(2+) site is built by Ser171 and Thr191. The region spanning 336–414 (PRKEVQAGVE…IGGLEFEYIP (79 aa)) is the OCT domain.

Belongs to the TRAFAC class OBG-HflX-like GTPase superfamily. OBG GTPase family. Monomer. It depends on Mg(2+) as a cofactor.

Its subcellular location is the cytoplasm. Functionally, an essential GTPase which binds GTP, GDP and possibly (p)ppGpp with moderate affinity, with high nucleotide exchange rates and a fairly low GTP hydrolysis rate. Plays a role in control of the cell cycle, stress response, ribosome biogenesis and in those bacteria that undergo differentiation, in morphogenesis control. The polypeptide is GTPase Obg (Thermus thermophilus (strain ATCC BAA-163 / DSM 7039 / HB27)).